The primary structure comprises 277 residues: Urease accessory protein UreD (277 aa).

It belongs to the UreD family. As to quaternary structure, ureD, UreF and UreG form a complex that acts as a GTP-hydrolysis-dependent molecular chaperone, activating the urease apoprotein by helping to assemble the nickel containing metallocenter of UreC. The UreE protein probably delivers the nickel.

It localises to the cytoplasm. Functionally, required for maturation of urease via the functional incorporation of the urease nickel metallocenter. The chain is Urease accessory protein UreD from Yersinia pestis bv. Antiqua (strain Antiqua).